The following is a 759-amino-acid chain: Short transient receptor potential channel 1 (759 aa).

The segment at 1-30 (MMAALYPSTDLSGVSSSSLPSSPSSSSPNE) is disordered. The Cytoplasmic portion of the chain corresponds to 1-311 (MMAALYPSTD…FGQMSGYRRK (311 aa)). A compositionally biased stretch (low complexity) spans 15 to 28 (SSSSLPSSPSSSSP). ANK repeat units follow at residues 46 to 75 (LNEK…SGDL), 83 to 109 (LGRN…YGCQ), and 124 to 146 (MDVA…MLLK). H155, C159, C161, and C164 together coordinate Zn(2+). An intramembrane region (discontinuously helical) is located at residues 312 to 345 (PTCKKIMTVLTVGIFWPVLSLCYLIAPKSQFGRI). At 346 to 352 (IHTPFMK) the chain is on the cytoplasmic side. Residues 353 to 370 (FIIHGASYFTFLLLLNLY) traverse the membrane as a helical segment. At 371 to 388 (SLVYNEDKKNTMGPALER) the chain is on the extracellular side. Residues 389–405 (IDYLLILWIIGMIWSDI) form a helical membrane-spanning segment. Residues 406–421 (KRLWYEGLEDFLEESR) lie on the Cytoplasmic side of the membrane. The helical transmembrane segment at 422–441 (NQLSFVMNSLYLATFALKVV) threads the bilayer. Residues 442-462 (AHNKFHDFADRKDWDAFHPTL) are Extracellular-facing. A helical transmembrane segment spans residues 463–483 (VAEGLFAFANVLSYLRLFFMY). Topologically, residues 484–502 (TTSSILGPLQISMGQMLQD) are cytoplasmic. Residues 503–524 (FGKFLGMFLLVLFSFTIGLTQL) traverse the membrane as a helical segment. The Extracellular portion of the chain corresponds to 525-589 (YDKGYTSKEQ…GEELQSFVGA (65 aa)). A disulfide bond links C537 and C542. A helical membrane pass occupies residues 590–610 (VIVGTYNVVVVIVLTKLLVAM). Residues 611-759 (LHKSFQLIAN…SKYAMFYPKN (149 aa)) lie on the Cytoplasmic side of the membrane.

This sequence belongs to the transient receptor (TC 1.A.4) family. STrpC subfamily. TRPC1 sub-subfamily. Heterotetramer with TRPC4 and/or TRPC5. Forms a heteromeric ion channel with TRPC4, with a 1:3 TRPC1:TRPC4 stoichiometry. Unlike other TRP channel proteins, does not form a homomeric channel. Interacts with TRPC4AP. Interacts with ITPR3. Interacts with MX1 and RNF24. Interacts with FKBP4. Interacts with PLSCR1. Interacts with PKD2L2. Forms a heterotetramer with PKD2 with a 2:2 stoichiometry; has distinct channel properties separate from PKD2 or TRPC1 homomers alone. Activation of PRKCA induces phosphorylation of TRPC1 and subsequent Ca2+ entry into cells. In terms of tissue distribution, expressed in brain, hippocampus, amygdala, Purkinje cells and single neurons in the cortex and striatum.

It localises to the cell membrane. It catalyses the reaction Ca(2+)(in) = Ca(2+)(out). The catalysed reaction is Na(+)(in) = Na(+)(out). The enzyme catalyses Li(+)(in) = Li(+)(out). It carries out the reaction Cs(+)(in) = Cs(+)(out). With respect to regulation, may be operated by a phosphatidylinositol second messenger system activated by receptor tyrosine kinases or G-protein coupled receptors. Also activated by intracellular calcium store depletion. Its function is as follows. Forms a receptor-activated non-selective calcium permeant cation channel. Forms a heteromeric ion channel with TRPC4 or TRPC5 that has reduced calcium permeability compared to the homomeric TRPC4 or TRPC5 channel. Also permeable to monovalent ions including sodium, lithium and cesium ions. The sequence is that of Short transient receptor potential channel 1 (Trpc1) from Rattus norvegicus (Rat).